Consider the following 477-residue polypeptide: Glycogen synthase (477 aa).

K15 is an ADP-alpha-D-glucose binding site.

It belongs to the glycosyltransferase 1 family. Bacterial/plant glycogen synthase subfamily.

It catalyses the reaction [(1-&gt;4)-alpha-D-glucosyl](n) + ADP-alpha-D-glucose = [(1-&gt;4)-alpha-D-glucosyl](n+1) + ADP + H(+). The protein operates within glycan biosynthesis; glycogen biosynthesis. Its function is as follows. Synthesizes alpha-1,4-glucan chains using ADP-glucose. The polypeptide is Glycogen synthase (Caldicellulosiruptor saccharolyticus (strain ATCC 43494 / DSM 8903 / Tp8T 6331)).